The chain runs to 507 residues: Chromosomal replication initiator protein DnaA (507 aa).

Residues 1 to 112 (MTDDPGSGFT…PATDEADDTT (112 aa)) are domain I, interacts with DnaA modulators. The segment at 99–162 (RIAPPATDEA…ERPRNTDSAT (64 aa)) is disordered. The segment covering 113–127 (VPPSENPATTSPDTT) has biased composition (polar residues). The tract at residues 113 to 166 (VPPSENPATTSPDTTTDNDEIDDSAAARGDNQHSWPSYFTERPRNTDSATAGVT) is domain II. The segment at 167–383 (SLNRRYTFDT…GALIRVTAFA (217 aa)) is domain III, AAA+ region. Gly211, Gly213, Lys214, and Thr215 together coordinate ATP. The interval 384 to 507 (SLNKTPIDKA…TTRIRQRSKR (124 aa)) is domain IV, binds dsDNA.

The protein belongs to the DnaA family. Oligomerizes as a right-handed, spiral filament on DNA at oriC.

Its subcellular location is the cytoplasm. Functionally, plays an essential role in the initiation and regulation of chromosomal replication. ATP-DnaA binds to the origin of replication (oriC) to initiate formation of the DNA replication initiation complex once per cell cycle. Binds the DnaA box (a 9 base pair repeat at the origin) and separates the double-stranded (ds)DNA. Forms a right-handed helical filament on oriC DNA; dsDNA binds to the exterior of the filament while single-stranded (ss)DNA is stabiized in the filament's interior. The ATP-DnaA-oriC complex binds and stabilizes one strand of the AT-rich DNA unwinding element (DUE), permitting loading of DNA polymerase. After initiation quickly degrades to an ADP-DnaA complex that is not apt for DNA replication. Binds acidic phospholipids. This Mycobacterium bovis (strain BCG / Tokyo 172 / ATCC 35737 / TMC 1019) protein is Chromosomal replication initiator protein DnaA.